Reading from the N-terminus, the 109-residue chain is Transmembrane protein 233 (109 aa).

The disordered stretch occupies residues M1–D30. At M1–T41 the chain is on the cytoplasmic side. Positions N21 to D30 are enriched in acidic residues. The helical intramembrane region spans I42–M62. Topologically, residues S63–W84 are cytoplasmic. A helical transmembrane segment spans residues V85–F105. At T106–A109 the chain is on the extracellular side.

The protein belongs to the CD225/Dispanin family. As to quaternary structure, interacts with the giant stinging tree toxin ExTxA (AC P0DQP3). Interacts with Nav1.7/SCN9A. Interacts with Nav1.1/SCN1A, Nav1.2/SCN2A, Nav1.3/SCN3A, Nav1.4/SCN4A, Nav1.5/SCN5A, and Nav1.6/SCN8A.

Its subcellular location is the cell membrane. Probable accessory protein of voltage-gated sodium channels. This chain is Transmembrane protein 233, found in Homo sapiens (Human).